A 121-amino-acid polypeptide reads, in one-letter code: Large ribosomal subunit protein uL14c (121 aa).

The protein belongs to the universal ribosomal protein uL14 family. Part of the 50S ribosomal subunit.

Its subcellular location is the plastid. It is found in the chloroplast. In terms of biological role, binds to 23S rRNA. This Euglena gracilis protein is Large ribosomal subunit protein uL14c.